Reading from the N-terminus, the 191-residue chain is Clusterin (191 aa).

Asparagine 79, asparagine 116, asparagine 142, and asparagine 162 each carry an N-linked (GlcNAc...) asparagine glycan. Phosphoserine is present on serine 184.

It belongs to the clusterin family. As to quaternary structure, antiparallel disulfide-linked heterodimer of an alpha chain and a beta chain. Self-associates and forms higher oligomers. Interacts with a broad range of misfolded proteins, including APP, APOC2 and LYZ. Slightly acidic pH promotes interaction with misfolded proteins. Forms high-molecular weight oligomers upon interaction with misfolded proteins. Interacts with APOA1, LRP2, CLUAP1 and PON1. Interacts with the complement membrane attack complex. Interacts (via alpha chain) with XRCC6. Interacts with SYVN1, COMMD1, BTRC, CUL1 and with ubiquitin and SCF (SKP1-CUL1-F-box protein) E3 ubiquitin-protein ligase complexes. Interacts (via alpha chain) with BAX in stressed cells, where BAX undergoes a conformation change leading to association with the mitochondrial membrane. Does not interact with BAX in unstressed cells. Found in a complex with LTF, CLU, EPPIN and SEMG1. Interacts (immaturely glycosylated pre-secreted form) with HSPA5; this interaction promotes CLU stability and facilitates stress-induced CLU retrotranslocation from the secretory pathway to the mitochondria, thereby reducing stress-induced apoptosis by stabilizing mitochondrial membrane integrity. Interacts with BCL2L1; this interaction releases and activates BAX and promotes cell death. Interacts with TGFBR2 and ACVR1. Interacts (secreted form) with STMN3; this interaction may act as an important modulator during neuronal differentiation. In terms of processing, proteolytically cleaved on its way through the secretory system, probably within the Golgi lumen. Proteolytic cleavage is not necessary for its chaperone activity. All non-secreted forms are not proteolytically cleaved. Chaperone activity of uncleaved forms is dependent on a non-reducing environment. Polyubiquitinated, leading to proteasomal degradation. Under cellular stress, the intracellular level of cleaved form is reduced due to proteasomal degradation. Post-translationally, heavily N-glycosylated. About 30% of the protein mass is comprised of complex N-linked carbohydrate. Endoplasmic reticulum (ER) stress induces changes in glycosylation status and increases level of hypoglycosylated forms. Core carbohydrates are essential for chaperone activity. Non-secreted forms are hypoglycosylated or unglycosylated.

It is found in the secreted. It localises to the nucleus. The protein localises to the cytoplasm. The protein resides in the mitochondrion membrane. Its subcellular location is the cytosol. It is found in the microsome. It localises to the endoplasmic reticulum. The protein localises to the mitochondrion. The protein resides in the perinuclear region. Its subcellular location is the cytoplasmic vesicle. It is found in the secretory vesicle. It localises to the chromaffin granule. Its function is as follows. Functions as extracellular chaperone that prevents aggregation of non native proteins. Prevents stress-induced aggregation of blood plasma proteins. Inhibits formation of amyloid fibrils by APP, APOC2, B2M, CALCA, CSN3, SNCA and aggregation-prone LYZ variants (in vitro). Does not require ATP. Maintains partially unfolded proteins in a state appropriate for subsequent refolding by other chaperones, such as HSPA8/HSC70. Does not refold proteins by itself. Binding to cell surface receptors triggers internalization of the chaperone-client complex and subsequent lysosomal or proteasomal degradation. When secreted, protects cells against apoptosis and against cytolysis by complement: inhibits assembly of the complement membrane attack complex (MAC) by preventing polymerization of C9 pore component of the MAC complex. Intracellular forms interact with ubiquitin and SCF (SKP1-CUL1-F-box protein) E3 ubiquitin-protein ligase complexes and promote the ubiquitination and subsequent proteasomal degradation of target proteins. Promotes proteasomal degradation of COMMD1 and IKBKB. Modulates NF-kappa-B transcriptional activity. Following stress, promotes apoptosis. Inhibits apoptosis when associated with the mitochondrial membrane by interference with BAX-dependent release of cytochrome c into the cytoplasm. Plays a role in the regulation of cell proliferation. An intracellular form suppresses stress-induced apoptosis by stabilizing mitochondrial membrane integrity through interaction with HSPA5. Secreted form does not affect caspase or BAX-mediated intrinsic apoptosis and TNF-induced NF-kappa-B-activity. Secreted form act as an important modulator during neuronal differentiation through interaction with STMN3. Plays a role in the clearance of immune complexes that arise during cell injury. This Mesocricetus auratus (Golden hamster) protein is Clusterin.